The sequence spans 231 residues: Ribonuclease 3 (231 aa).

The RNase III domain occupies 7–135 (IQAIESKLNF…ILGAVYLDGG (129 aa)). Glu-48 provides a ligand contact to Mg(2+). Residue Asp-52 is part of the active site. Residues Asn-121 and Glu-124 each contribute to the Mg(2+) site. Glu-124 is a catalytic residue. One can recognise a DRBM domain in the interval 160-229 (NPKNRLQQFT…AKQALSTHDN (70 aa)).

The protein belongs to the ribonuclease III family. Homodimer. Mg(2+) serves as cofactor.

It localises to the cytoplasm. The catalysed reaction is Endonucleolytic cleavage to 5'-phosphomonoester.. Its function is as follows. Digests double-stranded RNA. Involved in the processing of primary rRNA transcript to yield the immediate precursors to the large and small rRNAs (23S and 16S). Processes some mRNAs, and tRNAs when they are encoded in the rRNA operon. Processes pre-crRNA and tracrRNA of type II CRISPR loci if present in the organism. The sequence is that of Ribonuclease 3 from Chlamydia trachomatis serovar A (strain ATCC VR-571B / DSM 19440 / HAR-13).